The sequence spans 341 residues: Phospholipid phosphatase homolog 1.2 homolog (341 aa).

Transmembrane regions (helical) follow at residues 30-50, 71-91, and 122-142; these read LFIF…LLGV, ITAV…VLFV, and LLTY…LNIV. N-linked (GlcNAc...) asparagine glycosylation occurs at Asn162. A run of 2 helical transmembrane segments spans residues 223 to 243 and 257 to 277; these read RIVV…ISFS and VGIF…TDLF. Disordered stretches follow at residues 284–308 and 322–341; these read SETQ…ERHR and FEAT…PQSA. Residues 299–308 show a composition bias toward basic and acidic residues; that stretch reads RNSEDEERHR.

Belongs to the PA-phosphatase related phosphoesterase family.

It is found in the membrane. The sequence is that of Phospholipid phosphatase homolog 1.2 homolog from Caenorhabditis elegans.